The primary structure comprises 341 residues: Putative UPF0607 protein ENSP00000383783 (341 aa).

Residues 75–101 (EVRAEEPKEATEVKDQVETQGQEDNKR) show a composition bias toward basic and acidic residues. Disordered regions lie at residues 75-115 (EVRA…TSSL) and 216-278 (GLLM…PPPA). A compositionally biased stretch (low complexity) spans 234-245 (SSRSSPSRAASH).

Belongs to the UPF0607 family.

The chain is Putative UPF0607 protein ENSP00000383783 from Homo sapiens (Human).